Here is a 318-residue protein sequence, read N- to C-terminus: Olfactory receptor 2T3 (318 aa).

The Extracellular portion of the chain corresponds to 1–30 (MCSGNQTSQNQTASTDFTLTGLFAESKHAA). N-linked (GlcNAc...) asparagine glycosylation is found at asparagine 5 and asparagine 10. The chain crosses the membrane as a helical span at residues 31–54 (LLYTVTFLLFLMALTGNALLILLI). At 55-62 (HSEPRLHT) the chain is on the cytoplasmic side. Residues 63–84 (PMYFFISQLALMDLMYLCVTVP) form a helical membrane-spanning segment. At 85-105 (KMLVGQVTGDDTISPSGCGIQ) the chain is on the extracellular side. Cysteine 102 and cysteine 194 are disulfide-bonded. A helical membrane pass occupies residues 106-125 (MFFYLTLAGAEVFLLAAMAY). Topologically, residues 126–144 (DRYAAVCRPLHYPLLMNQR) are cytoplasmic. A helical transmembrane segment spans residues 145-163 (VCQLLVSACWVLGMVDGLL). Topologically, residues 164-200 (LTPITMSFPFCQSRKILSFFCETPALLKLSCSDVSLY) are extracellular. The chain crosses the membrane as a helical span at residues 201–224 (KTLMYLCCILMLLAPIMVISSSYT). Over 225–241 (LILHLIHRMNSAAGHRK) the chain is Cytoplasmic. The chain crosses the membrane as a helical span at residues 242–264 (ALATCSSHMIIVLLLFGASFYTY). The Extracellular segment spans residues 265–277 (MLPSSYHTAEQDM). The chain crosses the membrane as a helical span at residues 278-297 (MVSAFYTIFTPVLNPLIYSL). Residues 298-318 (RNKDVTRALRSMMQSRMNQEK) are Cytoplasmic-facing.

Belongs to the G-protein coupled receptor 1 family.

The protein localises to the cell membrane. Odorant receptor. The chain is Olfactory receptor 2T3 (OR2T3) from Homo sapiens (Human).